The primary structure comprises 214 residues: Alpha-S1-casein (214 aa).

The N-terminal stretch at 1 to 15 (MKLLILTCLVAVALA) is a signal peptide. 6 positions are modified to phosphoserine: serine 63, serine 79, serine 81, serine 82, serine 83, and serine 90. Repeats lie at residues 85–99 (EIVP…IQKE) and 125–140 (EIVP…SMKE).

The protein belongs to the alpha-casein family. Mammary gland specific. Secreted in milk.

It is found in the secreted. Its function is as follows. Important role in the capacity of milk to transport calcium phosphate. The protein is Alpha-S1-casein (CSN1S1) of Bubalus bubalis (Domestic water buffalo).